Reading from the N-terminus, the 139-residue chain is Putative pre-16S rRNA nuclease (139 aa).

It belongs to the YqgF nuclease family.

The protein resides in the cytoplasm. Its function is as follows. Could be a nuclease involved in processing of the 5'-end of pre-16S rRNA. In Dictyoglomus thermophilum (strain ATCC 35947 / DSM 3960 / H-6-12), this protein is Putative pre-16S rRNA nuclease.